The chain runs to 125 residues: MAGPSLACCLLGLLALTSACYIQNCPLGGKRAVLDLDVRKCLPCGPGGKGRCFGPSICCGDELGCFVGTAEALRCQEENYLPSPCQSGQKPCGSEGRCAAAGICCNPDGCRFDPACDPEATFSQR.

Residues 1–19 (MAGPSLACCLLGLLALTSA) form the signal peptide. Cys-20 and Cys-25 form a disulfide bridge. Gly-28 carries the post-translational modification Glycine amide. 7 disulfides stabilise this stretch: Cys-41-Cys-85, Cys-44-Cys-58, Cys-52-Cys-75, Cys-59-Cys-65, Cys-92-Cys-104, Cys-98-Cys-116, and Cys-105-Cys-110.

This sequence belongs to the vasopressin/oxytocin family. In terms of assembly, interacts with oxytocin receptor (Ki=1.5 nM). Interacts with vasopressin V1aR/AVPR1A (Ki=37 nM), V1bR/AVPR1B (Ki=222 nM), and V2R/AVPR2 receptors (Ki=823 nM).

Neurophysin 1 specifically binds oxytocin. Functionally, oxytocin causes contraction of the smooth muscle of the uterus and of the mammary gland. Acts by binding to oxytocin receptor (OXTR). This is Oxytocin-neurophysin 1 (OXT) from Sus scrofa (Pig).